Here is an 846-residue protein sequence, read N- to C-terminus: Sucrose synthase 6 (846 aa).

Residues 276–755 are GT-B glycosyltransferase; it reads CVFTVVIFSI…GLQRIYECYT (480 aa).

Belongs to the glycosyltransferase 1 family. Plant sucrose synthase subfamily.

The catalysed reaction is an NDP-alpha-D-glucose + D-fructose = a ribonucleoside 5'-diphosphate + sucrose + H(+). In terms of biological role, sucrose-cleaving enzyme that provides UDP-glucose and fructose for various metabolic pathways. This chain is Sucrose synthase 6 (SUS6), found in Oryza sativa subsp. japonica (Rice).